The chain runs to 359 residues: Oxopyrrolidines biosynthesis cluster protein G (359 aa).

A disordered region spans residues 1 to 32 (MDHLRDSLLSSLPRDSPSIGAMDYARRDREST). Over residues 7 to 18 (SLLSSLPRDSPS) the composition is skewed to low complexity.

Part of the gene cluster that mediates the biosynthesis of oxopyrrolidines, polyketide-amino acid hybrid compounds with feature structures of tetramic acid. Does not seem to play a role in oxopyrrolidines A and B biosynthesis. This Penicillium oxalicum (strain 114-2 / CGMCC 5302) (Penicillium decumbens) protein is Oxopyrrolidines biosynthesis cluster protein G.